Here is a 333-residue protein sequence, read N- to C-terminus: MIYAAFRSIGAYIPPKIMSNADFEKIIDTSDEWITKRTGIKERRIANEGEASSDLGARAGELAIERAAISKEEIDLVICATVTPDFLCMPSTACLIAAKLGLSNVMAFDVSAACTGFVYALNVAKAFIESGMKKNVLIVGAEKYSAILDYTDRTTCFLFGDGAGAAIISATNDKSESIIDINCSSDGNYEDLIKTPGGGSKNPCSQEVLENKMACIKMKGNETFKLAVKTLTSDVKTMLEKHNLTNEDINHFIPHQANYRIIKAVGEALDLSDEKTVVTVDKYGNTSAASIPMAMNYAFEQGKIKAGDTILFDAFGGGLTWGSALFKFAPIKR.

Residues Cys-114 and His-255 contribute to the active site. The ACP-binding stretch occupies residues 256–260 (QANYR). Residue Asn-285 is part of the active site.

This sequence belongs to the thiolase-like superfamily. FabH family. Homodimer.

The protein localises to the cytoplasm. The catalysed reaction is malonyl-[ACP] + acetyl-CoA + H(+) = 3-oxobutanoyl-[ACP] + CO2 + CoA. It participates in lipid metabolism; fatty acid biosynthesis. Its function is as follows. Catalyzes the condensation reaction of fatty acid synthesis by the addition to an acyl acceptor of two carbons from malonyl-ACP. Catalyzes the first condensation reaction which initiates fatty acid synthesis and may therefore play a role in governing the total rate of fatty acid production. Possesses both acetoacetyl-ACP synthase and acetyl transacylase activities. Its substrate specificity determines the biosynthesis of branched-chain and/or straight-chain of fatty acids. In Aliarcobacter butzleri (strain RM4018) (Arcobacter butzleri), this protein is Beta-ketoacyl-[acyl-carrier-protein] synthase III.